The primary structure comprises 440 residues: MASFVPTKQFVGASSSSDIGSSRLVSLQLPSKFSSSNFHLPSRPSQLKRLEIQAAGSTFGNYFRVTTFGESHGGGVGCIIDGCPPRLPLSESDMQVELDRRRPGQSRITTPRKETDTCKISSGTADGLTTGSPIKVEVPNTDQRGNDYSEMSLAYRPSHADATYDFKYGVRSVQGGGRSSARETIGRVAAGAVAKKILKLYSGAEVLAYVSQVHQVVLPEDLIDHQNVTLEQIESNIVRCPDPEYAEKMIAAIDAVRVRGDSVGGVVTCIVRNLPRGLGTPVFDKLEAELAKACMSLPATKGFEFGSGFAGTFMTGSEHNDEFYMDEHGRIRTRTNRSGGIQGGISNGEVINMRIGFKPTSTISRKQQTVTRDKHETELIARGRHDPCVVPRAVPMVEAMVALVLVDQLMAQYSQCMMFPINPELQEPLQSSPESAEVTL.

Residues 1–54 constitute a chloroplast transit peptide; sequence MASFVPTKQFVGASSSSDIGSSRLVSLQLPSKFSSSNFHLPSRPSQLKRLEIQA. The segment at 100–147 is disordered; the sequence is RRRPGQSRITTPRKETDTCKISSGTADGLTTGSPIKVEVPNTDQRGND. The segment covering 118-132 has biased composition (polar residues); the sequence is CKISSGTADGLTTGS.

The protein belongs to the chorismate synthase family. In terms of assembly, homotetramer. Requires FMNH2 as cofactor. Predominantly expressed in flowers and roots and, to a lesser extent, in stems, leaves, and cotyledons.

The protein localises to the plastid. Its subcellular location is the chloroplast. It carries out the reaction 5-O-(1-carboxyvinyl)-3-phosphoshikimate = chorismate + phosphate. It functions in the pathway metabolic intermediate biosynthesis; chorismate biosynthesis; chorismate from D-erythrose 4-phosphate and phosphoenolpyruvate: step 7/7. In terms of biological role, catalyzes the last common step of the biosynthesis of aromatic amino acids, produced via the shikimic acid pathway. In Solanum lycopersicum (Tomato), this protein is Chorismate synthase 1, chloroplastic (CS1).